Here is a 399-residue protein sequence, read N- to C-terminus: Probable peptidoglycan glycosyltransferase FtsW (399 aa).

9 helical membrane passes run 19–39, 61–81, 85–105, 114–134, 160–180, 198–218, 285–305, 314–334, and 350–370; these read PLPV…VMIS, ILFA…PVSW, SGWL…TPLG, WIPM…CLIA, VLGV…TVVL, FMPL…TQPY, LLGA…GLVI, MAFG…QAGI, and LPLV…IAVI.

The protein belongs to the SEDS family. FtsW subfamily.

It is found in the cell inner membrane. The catalysed reaction is [GlcNAc-(1-&gt;4)-Mur2Ac(oyl-L-Ala-gamma-D-Glu-L-Lys-D-Ala-D-Ala)](n)-di-trans,octa-cis-undecaprenyl diphosphate + beta-D-GlcNAc-(1-&gt;4)-Mur2Ac(oyl-L-Ala-gamma-D-Glu-L-Lys-D-Ala-D-Ala)-di-trans,octa-cis-undecaprenyl diphosphate = [GlcNAc-(1-&gt;4)-Mur2Ac(oyl-L-Ala-gamma-D-Glu-L-Lys-D-Ala-D-Ala)](n+1)-di-trans,octa-cis-undecaprenyl diphosphate + di-trans,octa-cis-undecaprenyl diphosphate + H(+). It functions in the pathway cell wall biogenesis; peptidoglycan biosynthesis. Its function is as follows. Peptidoglycan polymerase that is essential for cell division. This chain is Probable peptidoglycan glycosyltransferase FtsW, found in Marinobacter nauticus (strain ATCC 700491 / DSM 11845 / VT8) (Marinobacter aquaeolei).